Consider the following 114-residue polypeptide: Large ribosomal subunit protein uL22 (114 aa).

It belongs to the universal ribosomal protein uL22 family. In terms of assembly, part of the 50S ribosomal subunit.

Its function is as follows. This protein binds specifically to 23S rRNA; its binding is stimulated by other ribosomal proteins, e.g. L4, L17, and L20. It is important during the early stages of 50S assembly. It makes multiple contacts with different domains of the 23S rRNA in the assembled 50S subunit and ribosome. In terms of biological role, the globular domain of the protein is located near the polypeptide exit tunnel on the outside of the subunit, while an extended beta-hairpin is found that lines the wall of the exit tunnel in the center of the 70S ribosome. In Lysinibacillus sphaericus (strain C3-41), this protein is Large ribosomal subunit protein uL22.